Here is a 451-residue protein sequence, read N- to C-terminus: Probable plasmid replicative DNA helicase (451 aa).

The SF4 helicase domain maps to 194-451 (NDSFYDGLPT…SKFSAIKKVW (258 aa)). 225 to 232 (ARPSIGKT) lines the ATP pocket.

It belongs to the helicase family. DnaB subfamily. As to quaternary structure, homohexamer.

The catalysed reaction is Couples ATP hydrolysis with the unwinding of duplex DNA at the replication fork by translocating in the 5'-3' direction. This creates two antiparallel DNA single strands (ssDNA). The leading ssDNA polymer is the template for DNA polymerase III holoenzyme which synthesizes a continuous strand.. It carries out the reaction ATP + H2O = ADP + phosphate + H(+). A replicative DNA helicase, it participates in initiation and elongation during DNA replication. Travels ahead of the DNA replisome, separating dsDNA into templates for DNA synthesis. A processive ATP-dependent 5'-3' DNA helicase it has DNA-dependent ATPase activity. This Chlamydia muridarum (strain MoPn / Nigg) protein is Probable plasmid replicative DNA helicase.